Reading from the N-terminus, the 696-residue chain is Macrolide export ATP-binding/permease protein MacB (696 aa).

The ABC transporter domain maps to 6–244 (IELKNIERYH…KPQNKRTFID (239 aa)). Residue 42–49 (GASGSGKS) participates in ATP binding. Residues 254–287 (HNTEKLNRPNEKNNIDNDNKENNNGYNRNDNSFL) form a disordered region. Over residues 255–274 (NTEKLNRPNEKNNIDNDNKE) the composition is skewed to basic and acidic residues. Residues 275-284 (NNNGYNRNDN) are compositionally biased toward low complexity. 4 helical membrane passes run 324 to 344 (FLTM…IALG), 576 to 596 (IAFI…LVSV), 626 to 646 (MVSL…GGLF), and 659 to 679 (LSSF…FGYF).

This sequence belongs to the ABC transporter superfamily. Macrolide exporter (TC 3.A.1.122) family. As to quaternary structure, homodimer. Part of the tripartite efflux system MacAB-TolC, which is composed of an inner membrane transporter, MacB, a periplasmic membrane fusion protein, MacA, and an outer membrane component, TolC. The complex forms a large protein conduit and can translocate molecules across both the inner and outer membranes. Interacts with MacA.

Its subcellular location is the cell inner membrane. Its function is as follows. Part of the tripartite efflux system MacAB-TolC. MacB is a non-canonical ABC transporter that contains transmembrane domains (TMD), which form a pore in the inner membrane, and an ATP-binding domain (NBD), which is responsible for energy generation. Confers resistance against macrolides. This chain is Macrolide export ATP-binding/permease protein MacB, found in Haemophilus ducreyi (strain 35000HP / ATCC 700724).